The primary structure comprises 171 residues: ATP synthase subunit b 2 (171 aa).

The helical transmembrane segment at 9–29 threads the bilayer; the sequence is APWHHPVFWVAVAFVLFFVLF.

This sequence belongs to the ATPase B chain family. As to quaternary structure, F-type ATPases have 2 components, F(1) - the catalytic core - and F(0) - the membrane proton channel. F(1) has five subunits: alpha(3), beta(3), gamma(1), delta(1), epsilon(1). F(0) has three main subunits: a(1), b(2) and c(10-14). The alpha and beta chains form an alternating ring which encloses part of the gamma chain. F(1) is attached to F(0) by a central stalk formed by the gamma and epsilon chains, while a peripheral stalk is formed by the delta and b chains.

It localises to the cell inner membrane. Functionally, f(1)F(0) ATP synthase produces ATP from ADP in the presence of a proton or sodium gradient. F-type ATPases consist of two structural domains, F(1) containing the extramembraneous catalytic core and F(0) containing the membrane proton channel, linked together by a central stalk and a peripheral stalk. During catalysis, ATP synthesis in the catalytic domain of F(1) is coupled via a rotary mechanism of the central stalk subunits to proton translocation. In terms of biological role, component of the F(0) channel, it forms part of the peripheral stalk, linking F(1) to F(0). In Granulibacter bethesdensis (strain ATCC BAA-1260 / CGDNIH1), this protein is ATP synthase subunit b 2.